A 303-amino-acid chain; its full sequence is UDP-3-O-acyl-N-acetylglucosamine deacetylase (303 aa).

Residues His-79, His-238, and Asp-242 each coordinate Zn(2+). His-265 serves as the catalytic Proton donor.

This sequence belongs to the LpxC family. Requires Zn(2+) as cofactor.

The enzyme catalyses a UDP-3-O-[(3R)-3-hydroxyacyl]-N-acetyl-alpha-D-glucosamine + H2O = a UDP-3-O-[(3R)-3-hydroxyacyl]-alpha-D-glucosamine + acetate. It functions in the pathway glycolipid biosynthesis; lipid IV(A) biosynthesis; lipid IV(A) from (3R)-3-hydroxytetradecanoyl-[acyl-carrier-protein] and UDP-N-acetyl-alpha-D-glucosamine: step 2/6. Its function is as follows. Catalyzes the hydrolysis of UDP-3-O-myristoyl-N-acetylglucosamine to form UDP-3-O-myristoylglucosamine and acetate, the committed step in lipid A biosynthesis. This is UDP-3-O-acyl-N-acetylglucosamine deacetylase from Pseudoalteromonas translucida (strain TAC 125).